A 361-amino-acid chain; its full sequence is Hydroxymethylglutaryl-CoA synthase (361 aa).

Glu-92 serves as the catalytic Proton donor/acceptor. Cys-124 (acyl-thioester intermediate) is an active-site residue. Positions 124, 165, 214, and 247 each coordinate (3S)-3-hydroxy-3-methylglutaryl-CoA. The active-site Proton donor/acceptor is His-247. Lys-252 contributes to the CoA binding site. Positions 256, 279, and 309 each coordinate (3S)-3-hydroxy-3-methylglutaryl-CoA.

Belongs to the thiolase-like superfamily. Archaeal HMG-CoA synthase family. As to quaternary structure, interacts with acetoacetyl-CoA thiolase that catalyzes the precedent step in the pathway and with a DUF35 protein. The acetoacetyl-CoA thiolase/HMG-CoA synthase complex channels the intermediate via a fused CoA-binding site, which allows for efficient coupling of the endergonic thiolase reaction with the exergonic HMGCS reaction.

It catalyses the reaction acetoacetyl-CoA + acetyl-CoA + H2O = (3S)-3-hydroxy-3-methylglutaryl-CoA + CoA + H(+). The protein operates within metabolic intermediate biosynthesis; (R)-mevalonate biosynthesis; (R)-mevalonate from acetyl-CoA: step 2/3. Functionally, catalyzes the condensation of acetyl-CoA with acetoacetyl-CoA to form 3-hydroxy-3-methylglutaryl-CoA (HMG-CoA). Functions in the mevalonate (MVA) pathway leading to isopentenyl diphosphate (IPP), a key precursor for the biosynthesis of isoprenoid compounds that are building blocks of archaeal membrane lipids. The sequence is that of Hydroxymethylglutaryl-CoA synthase from Aeropyrum pernix (strain ATCC 700893 / DSM 11879 / JCM 9820 / NBRC 100138 / K1).